The sequence spans 331 residues: Ubiquinone biosynthesis protein UbiU (331 aa).

Positions 169, 176, 193, and 232 each coordinate [4Fe-4S] cluster.

It belongs to the peptidase U32 family. UbiU subfamily. Forms a heterodimer with UbiV. [4Fe-4S] cluster is required as a cofactor.

It participates in cofactor biosynthesis; ubiquinone biosynthesis. Required for O(2)-independent ubiquinone (coenzyme Q) biosynthesis. Together with UbiV, is essential for the C6-hydroxylation reaction in the oxygen-independent ubiquinone biosynthesis pathway. This Escherichia coli (strain K12) protein is Ubiquinone biosynthesis protein UbiU.